We begin with the raw amino-acid sequence, 263 residues long: Complement C1q tumor necrosis factor-related protein 6 (263 aa).

The signal sequence occupies residues 1–24; that stretch reads MRVIMGTASLGSIWAVFLLPLVFG. N-linked (GlcNAc...) asparagine glycosylation occurs at Asn76. Residues 80-123 are disordered; the sequence is LKGDKGDRGPSGTPGKPGKNGTRGDRGSQGIKGDKGQAGSPGSS. Positions 82–123 constitute a Collagen-like domain; the sequence is GDKGDRGPSGTPGKPGKNGTRGDRGSQGIKGDKGQAGSPGSS. The region spanning 124-263 is the C1q domain; that stretch reads CQTHYSAFSV…SGHLIKAEDN (140 aa).

It is found in the secreted. This is Complement C1q tumor necrosis factor-related protein 6 (C1qtnf6) from Rattus norvegicus (Rat).